The following is a 705-amino-acid chain: Ribonuclease R (705 aa).

The RNB domain occupies 240 to 567 (RRDLREQLCF…VHRLLKKALR (328 aa)). Residues 615-696 (GEEFIGIITG…ERARVEFELI (82 aa)) enclose the S1 motif domain.

It belongs to the RNR ribonuclease family. RNase R subfamily.

The protein localises to the cytoplasm. It catalyses the reaction Exonucleolytic cleavage in the 3'- to 5'-direction to yield nucleoside 5'-phosphates.. Functionally, 3'-5' exoribonuclease that releases 5'-nucleoside monophosphates and is involved in maturation of structured RNAs. The protein is Ribonuclease R of Aquifex aeolicus (strain VF5).